Consider the following 259-residue polypeptide: Complement factor D (259 aa).

A signal peptide spans 1–21 (MADRSGHLAALILLGAAVCVA). Positions 22 to 26 (QPRGR) are cleaved as a propeptide — activation peptide. The Peptidase S1 domain maps to 27–254 (ILGGQEAKSH…YVAWIDGVMA (228 aa)). Cysteines 52 and 68 form a disulfide. Residues H67 and D115 each act as charge relay system in the active site. Cystine bridges form between C149–C215, C180–C196, and C205–C230. The Charge relay system role is filled by S209. A self-inhibitor loop region spans residues 224-228 (TSGSR).

The protein belongs to the peptidase S1 family. Post-translationally, CFD is activated by the removal of 5 residues at the N-terminus, named activation peptide, by the MASP-3 isoform of MASP1.

Its subcellular location is the secreted. It catalyses the reaction Selective cleavage of Arg-|-Lys bond in complement factor B when in complex with complement subcomponent C3b or with cobra venom factor.. With respect to regulation, circulates in plasma in a mature but self-inhibited form. Activated by factor B (CFB), which displaces the self-inhibition loop. Associates with CFB complexed with complement C3b. In terms of biological role, serine protease that initiates the alternative pathway of the complement system, a cascade of proteins that leads to phagocytosis and breakdown of pathogens and signaling that strengthens the adaptive immune system. In contrast to other complement pathways (classical, lectin and GZMK) that are directly activated by pathogens or antigen-antibody complexes, the alternative complement pathway is initiated by the spontaneous hydrolysis of complement C3. The alternative complement pathway acts as an amplification loop that enhances complement activation by mediating the formation of C3 and C5 convertases. Activated CFD cleaves factor B (CFB) when the latter is complexed with complement C3b, activating the C3 convertase of the alternative pathway. The sequence is that of Complement factor D (CFD) from Sus scrofa (Pig).